A 337-amino-acid chain; its full sequence is Mitochondrial glutathione transporter SLC25A40 (337 aa).

Solcar repeat units lie at residues 14 to 132, 140 to 224, and 234 to 328; these read VTPL…LSAF, NETR…LKRW, and PTFM…GKSF. The next 6 membrane-spanning stretches (helical) occupy residues 20 to 40, 104 to 124, 146 to 166, 200 to 221, 240 to 260, and 299 to 319; these read MIAS…LDVV, LWSG…IYFT, IVAG…LELI, WAPT…YENL, FTSG…FDVV, and GLFT…AIMI.

The protein belongs to the mitochondrial carrier (TC 2.A.29) family.

Its subcellular location is the mitochondrion inner membrane. It catalyses the reaction glutathione(in) = glutathione(out). Its function is as follows. Probable mitochondrial transporter required for glutathione import into mitochondria. Glutathione, which plays key roles in oxidative metabolism, is produced exclusively in the cytosol and is imported in many organelles. Mitochondrial glutathione is required for the activity and stability of proteins containing iron-sulfur clusters, as well as erythropoiesis. The polypeptide is Mitochondrial glutathione transporter SLC25A40 (Mus musculus (Mouse)).